Consider the following 325-residue polypeptide: Bifunctional ligase/repressor BirA (325 aa).

A DNA-binding region (H-T-H motif) is located at residues 23–42 (GQKISDALGCSRTAVWKHIE). The BPL/LPL catalytic domain occupies 74 to 262 (RFGLKTEVMG…CFEKRYRDYM (189 aa)). Biotin-binding positions include Gln118, 122-124 (RGR), and Lys189.

Belongs to the biotin--protein ligase family.

It carries out the reaction biotin + L-lysyl-[protein] + ATP = N(6)-biotinyl-L-lysyl-[protein] + AMP + diphosphate + H(+). Its function is as follows. Acts both as a biotin--[acetyl-CoA-carboxylase] ligase and a repressor. The protein is Bifunctional ligase/repressor BirA of Bacillus subtilis (strain 168).